A 344-amino-acid polypeptide reads, in one-letter code: N-acetyl-gamma-glutamyl-phosphate reductase (344 aa).

Residue Cys148 is part of the active site.

The protein belongs to the NAGSA dehydrogenase family. Type 1 subfamily.

The protein resides in the cytoplasm. The catalysed reaction is N-acetyl-L-glutamate 5-semialdehyde + phosphate + NADP(+) = N-acetyl-L-glutamyl 5-phosphate + NADPH + H(+). It participates in amino-acid biosynthesis; L-arginine biosynthesis; N(2)-acetyl-L-ornithine from L-glutamate: step 3/4. In terms of biological role, catalyzes the NADPH-dependent reduction of N-acetyl-5-glutamyl phosphate to yield N-acetyl-L-glutamate 5-semialdehyde. The sequence is that of N-acetyl-gamma-glutamyl-phosphate reductase from Clostridium kluyveri (strain NBRC 12016).